The chain runs to 124 residues: uncharacterized protein (124 aa).

An N-terminal signal peptide occupies residues 1–21; the sequence is MFLLSLLHFFHPSLIPSLSLS.

This is an uncharacterized protein from Schizosaccharomyces pombe (strain 972 / ATCC 24843) (Fission yeast).